The chain runs to 351 residues: Polycomb group RING finger protein 6 (351 aa).

The interval 1 to 114 (MEEAETDATE…FSLRLESGRA (114 aa)) is disordered. Residues 9 to 19 (TENKRASEAKR) show a composition bias toward basic and acidic residues. Positions 24 to 37 (LPPPPPPISPPALI) are enriched in pro residues. S32 is subject to Phosphoserine. A compositionally biased stretch (low complexity) spans 38–51 (PAPAAGEEGPASLA). Basic and acidic residues predominate over residues 62-80 (RPPELEPERSLGRLRGRFE). A coiled-coil region spans residues 69-110 (ERSLGRLRGRFEDYDEELEEDEEMEEEEEEEEEMSHFSLRLE). Over residues 81 to 101 (DYDEELEEDEEMEEEEEEEEE) the composition is skewed to acidic residues. S116 carries the phosphoserine modification. The RING-type zinc finger occupies 135–174 (CSICKGYLIDATTITECLHTFCKSCIVRHFYYSNRCPKCN). Glycyl lysine isopeptide (Lys-Gly) (interchain with G-Cter in SUMO2) cross-links involve residues K224 and K235.

Component of a PRC1-like complex. Interacts with BMI1/PCGF4, RING1 and RNF2. Interacts with KDM5D. Interacts with CBX4, CBX6, CBX7 and CBX8. Post-translationally, phosphorylated during mitosis.

Its subcellular location is the nucleus. In terms of biological role, transcriptional repressor. May modulate the levels of histone H3K4Me3 by activating KDM5D histone demethylase. Component of a Polycomb group (PcG) multiprotein PRC1-like complex, a complex class required to maintain the transcriptionally repressive state of many genes, including Hox genes, throughout development. PcG PRC1 complex acts via chromatin remodeling and modification of histones; it mediates monoubiquitination of histone H2A 'Lys-119', rendering chromatin heritably changed in its expressibility. Within the PRC1-like complex, regulates RNF2 ubiquitin ligase activity. This chain is Polycomb group RING finger protein 6 (Pcgf6), found in Rattus norvegicus (Rat).